The primary structure comprises 445 residues: MGRLFGTDGVRGLANSDLTADLALRLAVAAASVLTAGTSDARPTAVIGRDPRASGEMLQAAVTAGLSSAGVDVLDVGILPTPAVAYLTAKLEASLGVMISASHNPMPDNGIKIFAAGGHKLDDAVEVAIEDALDGTAPPVLPTGAGIGRVRAVDDAAQLYLAHLASAASEPLAGLTVVVDCANGAASALAPVAYAAAGARVIAISADPDGLNINDGCGSTHLENLQKAVVDHGADLGLAHDGDADRCLAVDETGAVVDGDAIMAVLAIAMNEAGELVENTLVATVMSNLGLHIAMREAGINIVTAAVGDRYVLEELRAGGYSLGGEQSGHVVLPAFGTTGDGILTGLRLLGRMARTRKSASVLAATMTTLPQVLINVKVGDKAAVAASPSVLAAVADAERVLGDGGRVLLRPSGTEQLVRVMVEATELPLAQKLADELAEIVGSV.

Ser-102 serves as the catalytic Phosphoserine intermediate. Residues Ser-102, Asp-241, Asp-243, and Asp-245 each contribute to the Mg(2+) site. Ser-102 bears the Phosphoserine mark.

It belongs to the phosphohexose mutase family. Mg(2+) serves as cofactor. Post-translationally, activated by phosphorylation.

The enzyme catalyses alpha-D-glucosamine 1-phosphate = D-glucosamine 6-phosphate. Catalyzes the conversion of glucosamine-6-phosphate to glucosamine-1-phosphate. The sequence is that of Phosphoglucosamine mutase from Rhodococcus erythropolis (strain PR4 / NBRC 100887).